Here is a 243-residue protein sequence, read N- to C-terminus: Vimentin A2 (243 aa).

Residues 1–22 (GFSLQDELDFLKKLHDEELADV) form a coil 1B region. The region spanning 1-188 (GFSLQDELDF…KLLEGEESRI (188 aa)) is the IF rod domain. The interval 23-45 (QAQIQDQQVQVDMDMAKPDLTAA) is linker 12. Positions 46–184 (LRDVRLQYEN…ATYRKLLEGE (139 aa)) are coil 2. Residues 185-243 (ESRITTPLPNLSSFNLRDAILETKPILENTFSKKVLIKTIETRDGEVINESTQNHDDLE) are tail.

It belongs to the intermediate filament family. Homomer. One of the most prominent phosphoproteins in various cells of mesenchymal origin. Phosphorylation is enhanced during cell division, at which time vimentin filaments are significantly reorganized. As to expression, expressed in low amounts in retina, optic nerve, and brain and in higher amounts in spinal cord.

In terms of biological role, vimentins are class-III intermediate filaments found in various non-epithelial cells, especially mesenchymal cells. Vimentin is attached to the nucleus, endoplasmic reticulum, and mitochondria, either laterally or terminally. The protein is Vimentin A2 of Carassius auratus (Goldfish).